Consider the following 101-residue polypeptide: uncharacterized protein (101 aa).

This is an uncharacterized protein from Sulfolobus islandicus filamentous virus (isolate Iceland/Hveragerdi) (SIFV).